A 188-amino-acid chain; its full sequence is Crossover junction endodeoxyribonuclease RuvC (188 aa).

Residues Asp-14, Glu-74, and Asp-149 contribute to the active site. Residues Asp-14, Glu-74, and Asp-149 each coordinate Mg(2+).

It belongs to the RuvC family. In terms of assembly, homodimer which binds Holliday junction (HJ) DNA. The HJ becomes 2-fold symmetrical on binding to RuvC with unstacked arms; it has a different conformation from HJ DNA in complex with RuvA. In the full resolvosome a probable DNA-RuvA(4)-RuvB(12)-RuvC(2) complex forms which resolves the HJ. Requires Mg(2+) as cofactor.

Its subcellular location is the cytoplasm. It catalyses the reaction Endonucleolytic cleavage at a junction such as a reciprocal single-stranded crossover between two homologous DNA duplexes (Holliday junction).. Functionally, the RuvA-RuvB-RuvC complex processes Holliday junction (HJ) DNA during genetic recombination and DNA repair. Endonuclease that resolves HJ intermediates. Cleaves cruciform DNA by making single-stranded nicks across the HJ at symmetrical positions within the homologous arms, yielding a 5'-phosphate and a 3'-hydroxyl group; requires a central core of homology in the junction. The consensus cleavage sequence is 5'-(A/T)TT(C/G)-3'. Cleavage occurs on the 3'-side of the TT dinucleotide at the point of strand exchange. HJ branch migration catalyzed by RuvA-RuvB allows RuvC to scan DNA until it finds its consensus sequence, where it cleaves and resolves the cruciform DNA. The sequence is that of Crossover junction endodeoxyribonuclease RuvC from Bacteroides fragilis (strain ATCC 25285 / DSM 2151 / CCUG 4856 / JCM 11019 / LMG 10263 / NCTC 9343 / Onslow / VPI 2553 / EN-2).